The sequence spans 45 residues: Large ribosomal subunit protein bL34 (45 aa).

The disordered stretch occupies residues glutamate 23 to lysine 45. Residues leucine 31–lysine 45 show a composition bias toward basic residues.

It belongs to the bacterial ribosomal protein bL34 family.

This chain is Large ribosomal subunit protein bL34, found in Elusimicrobium minutum (strain Pei191).